A 4730-amino-acid chain; its full sequence is Dynein heavy chain, cytoplasmic (4730 aa).

Disordered stretches follow at residues M1 to P23 and T91 to S120. The segment at M1–Y1935 is stem. A compositionally biased stretch (low complexity) spans S10–P23. A coiled-coil region spans residues V867 to S900. The segment at E964–I1016 is disordered. A compositionally biased stretch (polar residues) spans S969–K978. Positions T1002–I1016 are enriched in low complexity. Coiled coils occupy residues E1204–S1224, A1343–D1372, R1425–L1441, and A1661–R1689. AAA regions lie at residues Y1936–S2158, K2238–L2531, E2635–A2885, and V2978–Q3252. G1974–T1981 contacts ATP. Residues I2231–Q2253 adopt a coiled-coil conformation. G2276–T2283 lines the ATP pocket. The segment at E2437–S2486 is disordered. Basic and acidic residues predominate over residues P2441–E2451. Positions Q2442–T2462 form a coiled coil. Residues Q2454–S2486 are compositionally biased toward low complexity. ATP contacts are provided by residues G2674 to T2681 and G3016 to S3023. Coiled coils occupy residues I3271–D3349, A3483–M3585, and T3854–E3881. The stalk stretch occupies residues I3271 to M3585. 2 AAA regions span residues L3638–L3867 and S4098–Y4312. Residues K4432–K4465 form a disordered region. Residues S4449–K4463 are compositionally biased toward basic and acidic residues.

It belongs to the dynein heavy chain family. In terms of assembly, consists of at least two heavy chains and a number of intermediate and light chains.

Its subcellular location is the cytoplasm. The protein localises to the cytoskeleton. Functionally, cytoplasmic dynein acts as a motor for the intracellular retrograde motility of vesicles and organelles along microtubules. Dynein has ATPase activity; the force-producing power stroke is thought to occur on release of ADP. This chain is Dynein heavy chain, cytoplasmic (dhcA), found in Dictyostelium discoideum (Social amoeba).